Consider the following 327-residue polypeptide: Tartrate-resistant acid phosphatase type 5 (327 aa).

The N-terminal stretch at 1–22 (MDTWMVLLGLQILLLPLLAHCT) is a signal peptide. Residues aspartate 35, aspartate 73, tyrosine 76, and asparagine 112 each coordinate Fe cation. Residues asparagine 118 and asparagine 149 are each glycosylated (N-linked (GlcNAc...) asparagine). An intrachain disulfide couples cysteine 163 to cysteine 221. Positions 207, 242, and 244 each coordinate Fe cation.

As to quaternary structure, exists either as monomer or, after proteolytic processing, as a dimer of two chains linked by disulfide bond(s). Requires Fe cation as cofactor. As to expression, characteristic constituent of osteoclasts and some mononuclear preosteoclasts. Preferentially expressed in skeletal tissues.

It localises to the lysosome. The enzyme catalyses a phosphate monoester + H2O = an alcohol + phosphate. In terms of biological role, may play a role in the process of bone resorption. The osteoclastic trap acts on nucleotide tri- and diphosphates with higher affinity, compared with other substrates. This Rattus norvegicus (Rat) protein is Tartrate-resistant acid phosphatase type 5 (Acp5).